The chain runs to 78 residues: Small ribosomal subunit protein bS18 (78 aa).

Belongs to the bacterial ribosomal protein bS18 family. In terms of assembly, part of the 30S ribosomal subunit. Forms a tight heterodimer with protein bS6.

Functionally, binds as a heterodimer with protein bS6 to the central domain of the 16S rRNA, where it helps stabilize the platform of the 30S subunit. In Beutenbergia cavernae (strain ATCC BAA-8 / DSM 12333 / CCUG 43141 / JCM 11478 / NBRC 16432 / NCIMB 13614 / HKI 0122), this protein is Small ribosomal subunit protein bS18.